A 111-amino-acid polypeptide reads, in one-letter code: Large ribosomal subunit protein uL22 (111 aa).

The protein belongs to the universal ribosomal protein uL22 family. Part of the 50S ribosomal subunit.

In terms of biological role, this protein binds specifically to 23S rRNA; its binding is stimulated by other ribosomal proteins, e.g. L4, L17, and L20. It is important during the early stages of 50S assembly. It makes multiple contacts with different domains of the 23S rRNA in the assembled 50S subunit and ribosome. Functionally, the globular domain of the protein is located near the polypeptide exit tunnel on the outside of the subunit, while an extended beta-hairpin is found that lines the wall of the exit tunnel in the center of the 70S ribosome. This Geotalea uraniireducens (strain Rf4) (Geobacter uraniireducens) protein is Large ribosomal subunit protein uL22.